The sequence spans 335 residues: Biotin synthase (335 aa).

Residues 51-281 (YRVQLASLLS…RSRVRLSAGR (231 aa)) enclose the Radical SAM core domain. Residues C66, C70, and C73 each contribute to the [4Fe-4S] cluster site. The [2Fe-2S] cluster site is built by C112, C144, C204, and R276.

It belongs to the radical SAM superfamily. Biotin synthase family. In terms of assembly, homodimer. [4Fe-4S] cluster is required as a cofactor. [2Fe-2S] cluster serves as cofactor.

It carries out the reaction (4R,5S)-dethiobiotin + (sulfur carrier)-SH + 2 reduced [2Fe-2S]-[ferredoxin] + 2 S-adenosyl-L-methionine = (sulfur carrier)-H + biotin + 2 5'-deoxyadenosine + 2 L-methionine + 2 oxidized [2Fe-2S]-[ferredoxin]. Its pathway is cofactor biosynthesis; biotin biosynthesis; biotin from 7,8-diaminononanoate: step 2/2. Its function is as follows. Catalyzes the conversion of dethiobiotin (DTB) to biotin by the insertion of a sulfur atom into dethiobiotin via a radical-based mechanism. The sequence is that of Biotin synthase from Prochlorococcus marinus (strain MIT 9303).